Reading from the N-terminus, the 71-residue chain is Conotoxin TxMMSK-05 (71 aa).

A signal peptide spans M1 to A20. The propeptide occupies V21–R52. 3 cysteine pairs are disulfide-bonded: C54–C70, C55–C66, and C60–C69.

It belongs to the conotoxin M superfamily. In terms of tissue distribution, expressed by the venom duct.

The protein localises to the secreted. In Conus textile (Cloth-of-gold cone), this protein is Conotoxin TxMMSK-05.